A 214-amino-acid polypeptide reads, in one-letter code: Putative nickel/cobalt efflux system MJ1092 (214 aa).

The next 6 membrane-spanning stretches (helical) occupy residues 2-22 (VMIM…LHAL), 46-66 (ILLG…LGIL), 79-99 (VHDM…IWII), 116-136 (VITL…AVLL), 149-169 (IYVA…AVAF), and 188-208 (LPLI…AHPI).

This sequence belongs to the NiCoT transporter (TC 2.A.52) family.

The protein resides in the cell membrane. Efflux system for nickel and cobalt. The polypeptide is Putative nickel/cobalt efflux system MJ1092 (Methanocaldococcus jannaschii (strain ATCC 43067 / DSM 2661 / JAL-1 / JCM 10045 / NBRC 100440) (Methanococcus jannaschii)).